The chain runs to 272 residues: Orotidine 5'-phosphate decarboxylase (272 aa).

The active-site Proton donor is Lys93.

The protein belongs to the OMP decarboxylase family. Type 2 subfamily.

It carries out the reaction orotidine 5'-phosphate + H(+) = UMP + CO2. It participates in pyrimidine metabolism; UMP biosynthesis via de novo pathway; UMP from orotate: step 2/2. The protein is Orotidine 5'-phosphate decarboxylase of Roseiflexus sp. (strain RS-1).